We begin with the raw amino-acid sequence, 401 residues long: Exodeoxyribonuclease 7 large subunit (401 aa).

The protein belongs to the XseA family. In terms of assembly, heterooligomer composed of large and small subunits.

Its subcellular location is the cytoplasm. It carries out the reaction Exonucleolytic cleavage in either 5'- to 3'- or 3'- to 5'-direction to yield nucleoside 5'-phosphates.. Functionally, bidirectionally degrades single-stranded DNA into large acid-insoluble oligonucleotides, which are then degraded further into small acid-soluble oligonucleotides. The protein is Exodeoxyribonuclease 7 large subunit of Lachnoclostridium phytofermentans (strain ATCC 700394 / DSM 18823 / ISDg) (Clostridium phytofermentans).